A 239-amino-acid polypeptide reads, in one-letter code: tRNA (guanine-N(7)-)-methyltransferase (239 aa).

Residues Glu69, Glu94, Asp121, and Asp144 each coordinate S-adenosyl-L-methionine. The active site involves Asp144. Lys148 is a substrate binding site. Positions 150 to 155 (RHNKRR) are interaction with RNA. Substrate-binding positions include Asp180 and 217 to 220 (TKFE).

This sequence belongs to the class I-like SAM-binding methyltransferase superfamily. TrmB family. In terms of assembly, monomer.

It carries out the reaction guanosine(46) in tRNA + S-adenosyl-L-methionine = N(7)-methylguanosine(46) in tRNA + S-adenosyl-L-homocysteine. It functions in the pathway tRNA modification; N(7)-methylguanine-tRNA biosynthesis. Catalyzes the formation of N(7)-methylguanine at position 46 (m7G46) in tRNA. This Shigella boydii serotype 4 (strain Sb227) protein is tRNA (guanine-N(7)-)-methyltransferase.